The following is a 791-amino-acid chain: MVATSSKRTLDPKEEHLPADKTSTNSSNTIISELATQEKSSSSGTTLKLIALNIKSISDEDVGYIQNVERLSLRKNHLTSLPASFKRLSRLQYLDLHNNNFKEIPYILTQCPQLEILDLSSNEIEALPDEISSFWQDNIRVLSLKDNNVTSIRNLKSITKLNKLSILDLEDNKIPKEELDQVQSYTPFHTGIPKEEYWAIAISRYLKDHPNLPTPEPKISRAAKRMGFINTNLSNGAMNENNIISLAPSANTTISASTAMVSSNQTSATSFSGTVNAESEQSGAVNGTELYNHTKYNDYFKRLSILPEESMSNGHQKISHAELVVSCRKLLFSFTECQQAIRKIASFCKEKAVAVNVVSLLYSVRSHTDNLVEVLQQTENEDESHDQALIKLCLTIITNFKQIITLLRKNFEIFFKEDDLCFIRMFYMTLMCAYMEMYNAWSFIKEDDQVSGSASKAPKKHSFSRHETSSSSITSGGGPAASTTSTHCSGNIKLLPKTRSTRTPSASALLSNSNILTGDTTAVPLLSPNLNGAHTHGPILGHQNAISNGSSQTNMNEVKTTSDTIPRQQLLQHNKSISDSKKESQAHEPKQHPVMTSSIINASNSNNVSNVNITPPPMNGGGAANSSANVVETNIDIQLYQTLSTVVKMVSVVYNQLTSEISKIAIASTMGKQILTDSLAPKIRDLTETCRQAMDLSKQLNERLNVLIPNDSNSEKYLTSLEKLKTWEIMNSFLKVIISILANTKIVMSDVPNLNELRPNLANLAKITKDVTVILDLSSYKAVSVSANSPE.

The tract at residues 1–28 (MVATSSKRTLDPKEEHLPADKTSTNSSN) is disordered. Positions 8–19 (RTLDPKEEHLPA) are enriched in basic and acidic residues. LRR repeat units lie at residues 43–64 (SGTT…DVGY), 67–88 (NVER…FKRL), 90–111 (RLQY…LTQC), 113–134 (QLEI…ISSF), 138–159 (NIRV…KSIT), and 163–183 (KLSI…DQVQ). A Phosphothreonine modification is found at T214. Disordered regions lie at residues 454 to 506 (ASKA…TPSA) and 534 to 569 (HTHG…PRQQ). The span at 469 to 486 (SSSSITSGGGPAASTTST) shows a compositional bias: low complexity. The segment covering 544 to 569 (NAISNGSSQTNMNEVKTTSDTIPRQQ) has biased composition (polar residues).

The protein localises to the cytoplasm. In terms of biological role, required for proper cell morphogenesis and cell separation after mitosis. Functions in the RAM (regulation of ACE2 activity and cellular morphogenesis) signaling network and is required for proper ACE2 localization and CBK1 kinase activity. This chain is Leucine-rich repeat-containing protein SOG2, found in Saccharomyces cerevisiae (strain ATCC 204508 / S288c) (Baker's yeast).